A 375-amino-acid polypeptide reads, in one-letter code: Paralyzed arrest at two-fold protein 6 (375 aa).

Residues 1 to 51 (MSTLGRSKTPSRDEPKKPGVFEKLSGTLSRKKKAPEDEHGNQGGAHHATDE) form a disordered region. The span at 10–20 (PSRDEPKKPGV) shows a compositional bias: basic and acidic residues. Calponin-homology (CH) domains follow at residues 99-206 (AQVV…LHYR) and 266-373 (AHVK…TKYK).

The protein belongs to the parvin family. May interact (via calponin-homology (CH) 2 domain) with pat-4 (via kinase domain). May form a complex with unc-112 and pat-4. Component of an integrin containing attachment complex, composed of at least pat-2, pat-3, pat-4, pat-6, unc-52, unc-97 and unc-112. In terms of tissue distribution, expressed from 1.5 stage embryos, mostly within the muscle cells. In adult hermaphrodites, expressed in the attachments of other muscles, including the uterine, anal depressor, anal sphincter, and vulval muscles, as well as in the spermatheca and the distal tip cells. Expressed in mechanosensory receptor neurons ALML/R, PLML/R, AVM, and PVM. Localizes at body wall muscle attachments.

Its subcellular location is the cytoplasm. It localises to the cytoskeleton. It is found in the myofibril. The protein localises to the sarcomere. The protein resides in the m line. Its subcellular location is the perikaryon. It localises to the cell projection. It is found in the axon. In terms of biological role, involved in the regulation of cell adhesion and cytoskeleton organization. Component of an integrin containing attachment complex, which is required for muscle development and maintenance. During embryonic development, required to recruit cpna-1, unc-89 and myofilaments to newly forming integrin attachments composed of integrins pat-2/pat-3, pat-4 and unc-112. Also required to reposition the integrin-based attachments so that they form the highly ordered array of dense body and M-line attachments that are characteristic of mature muscle cells. During the formation of neuromuscular junctions at the larval stage, negatively regulates membrane protrusion from body wall muscles. This Caenorhabditis elegans protein is Paralyzed arrest at two-fold protein 6.